Reading from the N-terminus, the 282-residue chain is HTH-type transcriptional activator RhaR (282 aa).

One can recognise an HTH araC/xylS-type domain in the interval 179–277; it reads DKLITRLAAS…GMTPSQWRHL (99 aa). DNA-binding regions (H-T-H motif) lie at residues 196–217 and 244–267; these read DKFC…RQQT and ISDI…TRET.

Binds DNA as a dimer.

The protein localises to the cytoplasm. In terms of biological role, activates expression of the rhaSR operon in response to L-rhamnose. In Escherichia coli O1:K1 / APEC, this protein is HTH-type transcriptional activator RhaR.